The primary structure comprises 158 residues: NAD(P)H-quinone oxidoreductase subunit N (158 aa).

The protein belongs to the complex I NdhN subunit family. As to quaternary structure, NDH-1 can be composed of about 15 different subunits; different subcomplexes with different compositions have been identified which probably have different functions.

It localises to the cellular thylakoid membrane. It carries out the reaction a plastoquinone + NADH + (n+1) H(+)(in) = a plastoquinol + NAD(+) + n H(+)(out). It catalyses the reaction a plastoquinone + NADPH + (n+1) H(+)(in) = a plastoquinol + NADP(+) + n H(+)(out). Functionally, NDH-1 shuttles electrons from an unknown electron donor, via FMN and iron-sulfur (Fe-S) centers, to quinones in the respiratory and/or the photosynthetic chain. The immediate electron acceptor for the enzyme in this species is believed to be plastoquinone. Couples the redox reaction to proton translocation, and thus conserves the redox energy in a proton gradient. Cyanobacterial NDH-1 also plays a role in inorganic carbon-concentration. This is NAD(P)H-quinone oxidoreductase subunit N from Rippkaea orientalis (strain PCC 8801 / RF-1) (Cyanothece sp. (strain PCC 8801)).